A 392-amino-acid chain; its full sequence is Early estrogen-induced gene 1 protein (392 aa).

In terms of domain architecture, C2 NT-type spans 2–145 (AFLMKKKKFK…ILKVTIGMFL (144 aa)). The required for interaction with TNFRSF11A/RANK stretch occupies residues 129-138 (NTRQDNSILK). Positions 173–324 (LTCKGGGTSS…RKKDSVESHP (152 aa)) are disordered. Positions 183–194 (GGSSSTNSLTGS) are enriched in low complexity. A compositionally biased stretch (polar residues) spans 228-255 (SRNSSYASQQSKLSGYSTEHSRSSSLSD). Low complexity predominate over residues 262–273 (TSTSSSASGGLS). Composition is skewed to basic and acidic residues over residues 281-300 (GMER…EKPP) and 307-324 (HLSD…ESHP).

Belongs to the EEIG family. In terms of assembly, part of a complex composed of EEIG1, TNFRSF11A/RANK, PLCG2, GAB2, TEC and BTK; complex formation increases in the presence of TNFSF11/RANKL. Interacts with PRDM1/BLIMP1; following TNFSF11/RANKL stimulation in bone marrow-derived macrophages, the interaction promotes the binding of PRDM1/BLIMP1 to the gene promoter of IRF8. Interacts (via N-terminus) with TNFRSF11A/RANK (via cytoplasmic domain); when in the presence of TNFSF11/RANKL. Expressed during TNFSF11/RANKL-induced differentiation of bone marrow-derived macrophages to osteoclasts.

Its subcellular location is the nucleus. The protein localises to the cytoplasm. It localises to the membrane raft. Its function is as follows. Key component of TNFSF11/RANKL- and TNF-induced osteoclastogenesis pathways, thereby mediates bone resorption in pathological bone loss conditions. Required for TNFSF11/RANKL-induced osteoclastogenesis via its interaction with TNFRSF11A/RANK, thereby facilitates the downsteam transcription of NFATC1 and activation of PLCG2. Facilitates recruitment of the transcriptional repressor PRDM1/BLIMP1 to the promoter of the anti-osteoclastogenesis gene IRF8, thereby resulting in transcription of osteoclast differentiation factors. May play a role in estrogen action. The chain is Early estrogen-induced gene 1 protein (Eeig1) from Mus musculus (Mouse).